Reading from the N-terminus, the 240-residue chain is MRSSVLRSLRGRLVINLESTRKLRLSRTNIVPGRKKGQKSIKSKNMARKGNPILVRLGKNRSSDSSWFSAEALLGCLYFFIYFVAPTLGPVLFLLRLIHFVWGLRLGLGNENFHFGVGPDGGATGLDLNQPPQEQQPTLGVNRAALDLNELPPVHLLYAEVEGPQSTKAQNDVMLAHLNQVQNLTRDLQTEPNIWRRQALIDILDWEVRSLQRHFRIFRQRDRLREVQRSWLREQLNRYR.

A helical membrane pass occupies residues 73–93; that stretch reads LLGCLYFFIYFVAPTLGPVLF.

This sequence belongs to the universal ribosomal protein uS3 family.

It localises to the mitochondrion membrane. This is an uncharacterized protein from Arabidopsis thaliana (Mouse-ear cress).